We begin with the raw amino-acid sequence, 145 residues long: Transcriptional regulator MraZ (145 aa).

2 consecutive SpoVT-AbrB domains span residues 7 to 54 (NATN…GPDL) and 83 to 126 (GVFM…QPQA).

Belongs to the MraZ family. As to quaternary structure, forms oligomers.

The protein localises to the cytoplasm. The protein resides in the nucleoid. This chain is Transcriptional regulator MraZ, found in Rhizobium leguminosarum bv. trifolii (strain WSM2304).